A 212-amino-acid polypeptide reads, in one-letter code: ATP phosphoribosyltransferase (212 aa).

It belongs to the ATP phosphoribosyltransferase family. Short subfamily. Heteromultimer composed of HisG and HisZ subunits.

The protein resides in the cytoplasm. It catalyses the reaction 1-(5-phospho-beta-D-ribosyl)-ATP + diphosphate = 5-phospho-alpha-D-ribose 1-diphosphate + ATP. It functions in the pathway amino-acid biosynthesis; L-histidine biosynthesis; L-histidine from 5-phospho-alpha-D-ribose 1-diphosphate: step 1/9. In terms of biological role, catalyzes the condensation of ATP and 5-phosphoribose 1-diphosphate to form N'-(5'-phosphoribosyl)-ATP (PR-ATP). Has a crucial role in the pathway because the rate of histidine biosynthesis seems to be controlled primarily by regulation of HisG enzymatic activity. The sequence is that of ATP phosphoribosyltransferase from Clostridium botulinum (strain Langeland / NCTC 10281 / Type F).